A 96-amino-acid polypeptide reads, in one-letter code: Co-chaperonin GroES (96 aa).

This sequence belongs to the GroES chaperonin family. As to quaternary structure, heptamer of 7 subunits arranged in a ring. Interacts with the chaperonin GroEL.

The protein localises to the cytoplasm. Functionally, together with the chaperonin GroEL, plays an essential role in assisting protein folding. The GroEL-GroES system forms a nano-cage that allows encapsulation of the non-native substrate proteins and provides a physical environment optimized to promote and accelerate protein folding. GroES binds to the apical surface of the GroEL ring, thereby capping the opening of the GroEL channel. This chain is Co-chaperonin GroES, found in Shewanella oneidensis (strain ATCC 700550 / JCM 31522 / CIP 106686 / LMG 19005 / NCIMB 14063 / MR-1).